The primary structure comprises 415 residues: D-galactonate dehydratase family member RspA (415 aa).

The substrate site is built by Asn48 and His133. The active-site Proton donor/acceptor is Tyr170. Asp223 serves as a coordination point for Mg(2+). His225 functions as the Proton donor/acceptor in the catalytic mechanism. Mg(2+)-binding residues include Glu249 and Glu275. The substrate site is built by Glu275, Arg296, His325, Asp329, and Glu352.

This sequence belongs to the mandelate racemase/muconate lactonizing enzyme family. GalD subfamily. Mg(2+) is required as a cofactor.

The catalysed reaction is D-mannonate = 2-dehydro-3-deoxy-D-gluconate + H2O. Its function is as follows. Has low D-mannonate dehydratase activity (in vitro), suggesting that this is not a physiological substrate and that it has no significant role in D-mannonate degradation in vivo. Has no detectable activity with a panel of 70 other acid sugars (in vitro). The chain is D-galactonate dehydratase family member RspA (rspA) from Escherichia coli (strain MS 21-1).